Reading from the N-terminus, the 270-residue chain is MADSYLHAPTLVRATTPLVQCLTNAVVMQFTANALLAIGASPAMVDTPAESFDFAGVADGVLINAGTPSAEQYAGMERAIEGATAAGTPWVLDPVGVGGLAERSAFLRRAVDKHPAAIRGNASEIVALAGLGAGGRGVDATDDVADAVEAAQVLARRTGGVVAVTGAEDLIVSRGRVSWLKSGDPMLQLVIGTGCALGAVTAAYLGATQDTDIDPHDAVVAAHAHLGAAGRIAATRATAPGSYAVALIDALHQLDRNQLANLTHLREENR.

Residue methionine 44 participates in substrate binding. 2 residues coordinate ATP: arginine 119 and threonine 165. Glycine 192 is a binding site for substrate.

Belongs to the Thz kinase family. Mg(2+) serves as cofactor.

It carries out the reaction 5-(2-hydroxyethyl)-4-methylthiazole + ATP = 4-methyl-5-(2-phosphooxyethyl)-thiazole + ADP + H(+). It functions in the pathway cofactor biosynthesis; thiamine diphosphate biosynthesis; 4-methyl-5-(2-phosphoethyl)-thiazole from 5-(2-hydroxyethyl)-4-methylthiazole: step 1/1. In terms of biological role, catalyzes the phosphorylation of the hydroxyl group of 4-methyl-5-beta-hydroxyethylthiazole (THZ). This is Hydroxyethylthiazole kinase from Corynebacterium efficiens (strain DSM 44549 / YS-314 / AJ 12310 / JCM 11189 / NBRC 100395).